The chain runs to 310 residues: Ribosomal RNA small subunit methyltransferase H (310 aa).

Residues 33–35 (AGH), Asp-53, Phe-79, Asp-100, and Gln-107 contribute to the S-adenosyl-L-methionine site.

Belongs to the methyltransferase superfamily. RsmH family.

It localises to the cytoplasm. It catalyses the reaction cytidine(1402) in 16S rRNA + S-adenosyl-L-methionine = N(4)-methylcytidine(1402) in 16S rRNA + S-adenosyl-L-homocysteine + H(+). In terms of biological role, specifically methylates the N4 position of cytidine in position 1402 (C1402) of 16S rRNA. The protein is Ribosomal RNA small subunit methyltransferase H of Clostridium botulinum (strain Eklund 17B / Type B).